The primary structure comprises 320 residues: MPIIRRTSRATASSSKSATSSILRQAILVFTGFLLGALFMVFVPSLYNAAEPSSLHRLMNPIRRNTLSARASSDILKLGNPGPVSDLLERSGYILSYNRRDRLAHWVGEHLTSASLQAGQGVDRDKSNFQEDTDIPEMFRAHLKDYVSSGYDRGHQAPAADDLSSQEAMDETFLLSNMAPQVGVGFNRHYWAYLEGFMRDLTQNFTDVYVYTGPLFLPSAASTGRKNPAYSIEYPFLGATTPNVPVPTHFFKIALTTTASSEYALGAFVLPNQAIDSSTPLTNFKVELEAIEKAAGLVFFDKLDRSKFADLCSKTTCQVR.

The active-site Proton acceptor is the His155. Asn187 contributes to the Mg(2+) binding site. Asn204 is a glycosylation site (N-linked (GlcNAc...) asparagine). Residues Cys312 and Cys317 are joined by a disulfide bond.

Belongs to the DNA/RNA non-specific endonuclease family. Homodimer; as a result of non-covalent interactions and not through the disulfide linkages between the two monomers. Mg(2+) is required as a cofactor. Requires Mn(2+) as cofactor. Glycosylated.

Its subcellular location is the secreted. Its function is as follows. This enzyme has both RNase and DNase activity. The chain is Nuclease from Syncephalastrum racemosum (Filamentous fungus).